Here is a 116-residue protein sequence, read N- to C-terminus: Large ribosomal subunit protein uL18 (116 aa).

The protein belongs to the universal ribosomal protein uL18 family. Part of the 50S ribosomal subunit; part of the 5S rRNA/L5/L18/L25 subcomplex. Contacts the 5S and 23S rRNAs.

Its function is as follows. This is one of the proteins that bind and probably mediate the attachment of the 5S RNA into the large ribosomal subunit, where it forms part of the central protuberance. The polypeptide is Large ribosomal subunit protein uL18 (Psychromonas ingrahamii (strain DSM 17664 / CCUG 51855 / 37)).